Consider the following 301-residue polypeptide: Bifunctional protein FolD (301 aa).

NADP(+)-binding positions include 164–166, serine 191, and isoleucine 232; that span reads GRS.

Belongs to the tetrahydrofolate dehydrogenase/cyclohydrolase family. As to quaternary structure, homodimer.

The enzyme catalyses (6R)-5,10-methylene-5,6,7,8-tetrahydrofolate + NADP(+) = (6R)-5,10-methenyltetrahydrofolate + NADPH. It catalyses the reaction (6R)-5,10-methenyltetrahydrofolate + H2O = (6R)-10-formyltetrahydrofolate + H(+). Its pathway is one-carbon metabolism; tetrahydrofolate interconversion. Its function is as follows. Catalyzes the oxidation of 5,10-methylenetetrahydrofolate to 5,10-methenyltetrahydrofolate and then the hydrolysis of 5,10-methenyltetrahydrofolate to 10-formyltetrahydrofolate. In Borrelia garinii subsp. bavariensis (strain ATCC BAA-2496 / DSM 23469 / PBi) (Borreliella bavariensis), this protein is Bifunctional protein FolD.